The sequence spans 820 residues: MKLNKITSYIGFALLSGGALAAPSTPTLDWQPQQYSFVEVNVDGLGSYKQLVKAKDVVDISIKWNAWSGSGGDNYKVYFDDLLVNQGSLPAGTKSGVVQFPYTKSGRHQLYLELCEGTVCARSAGKEIVIADTDGAHLAPLPMNVDPNNRNNGTIPGRVTGAYFVEWGIYGRNYDVTKIPAHNLSHILYGFIPICGPNESLKSIEIGNSWRALQTACADSQDYEVVIHDPWAAVQKSMPGVDAKDPIRGVYSQLMALKQRYPDLKILPSVGGWTLSDPFHGFTNKANRDTFVASVKQFLKTWKFYDGVDIDWEFPGGDGPNPDLGDPINDGPAYVALMQELRAMLDELEAETGRQYELTSAIGAGYDKIEDVDYQAAQQYMDYIFAMTYDFYGAWNNETGHQTGIYCGSHLSTDECNGTGVDDNGVPRKGPAYTGDHAIQLLLQQGVQPSKLVMGVAMYGRGWEGVLDANAAIPGNPMTAPGNGPLTGSTSEGVWEPGIMDYKAIAANAVGQGGSGVNGYEVGYDEQAQAAYVWNRSNGKLITYDSPRSVIAKGQYANTHQLAGLFGWEIDADNGDILNAMYDGLTAGEIPNRAPTIGVSGPINVTSGQVVNVDAQASDLDNDPLTYSWVAAPGLALSANNTAAVAVTAPSVAQQTSYDLTVTVNDGALSTTKTIVVVVNPEGANAAPVVTPVSDISVNEGASATVNVSATDPEGAALSYSWSVPAELSVANGSSATITAANVTADTTVPVTVTVSDGVNAVDTTFNVTIKDGAEYPTWDRSTVYVGGDRVIHNSNVFEAKWWTQGEEPGTADVWKAVTN.

The signal sequence occupies residues 1–21 (MKLNKITSYIGFALLSGGALA). In terms of domain architecture, GH18 spans 158–588 (RVTGAYFVEW…NAMYDGLTAG (431 aa)). E313 serves as the catalytic Proton donor.

This sequence belongs to the glycosyl hydrolase 18 family. Chitinase class II subfamily.

The enzyme catalyses Random endo-hydrolysis of N-acetyl-beta-D-glucosaminide (1-&gt;4)-beta-linkages in chitin and chitodextrins.. Stimulated by magnesium ions; inhibited by N-bromosuccinimide and 2-hydroxy-5-nitrobenzyl bromide. The sequence is that of Chitinase A (chiA) from Pseudoalteromonas piscicida.